We begin with the raw amino-acid sequence, 141 residues long: Nucleoside diphosphate kinase (141 aa).

ATP is bound by residues Lys11, Tyr59, Arg87, Thr93, Arg104, and Asn114. Catalysis depends on His117, which acts as the Pros-phosphohistidine intermediate.

The protein belongs to the NDK family. In terms of assembly, homotetramer. Mg(2+) serves as cofactor.

The protein localises to the cytoplasm. The catalysed reaction is a 2'-deoxyribonucleoside 5'-diphosphate + ATP = a 2'-deoxyribonucleoside 5'-triphosphate + ADP. The enzyme catalyses a ribonucleoside 5'-diphosphate + ATP = a ribonucleoside 5'-triphosphate + ADP. In terms of biological role, major role in the synthesis of nucleoside triphosphates other than ATP. The ATP gamma phosphate is transferred to the NDP beta phosphate via a ping-pong mechanism, using a phosphorylated active-site intermediate. The polypeptide is Nucleoside diphosphate kinase (Orientia tsutsugamushi (strain Boryong) (Rickettsia tsutsugamushi)).